Reading from the N-terminus, the 152-residue chain is uncharacterized protein (152 aa).

A run of 3 helical transmembrane segments spans residues 15-35 (IINV…IYDI), 43-63 (LVVA…LILT), and 117-137 (TFLL…KLLI).

To M.jannaschii MJ0129 and MJ0587.

The protein localises to the cell membrane. This is an uncharacterized protein from Methanocaldococcus jannaschii (strain ATCC 43067 / DSM 2661 / JAL-1 / JCM 10045 / NBRC 100440) (Methanococcus jannaschii).